Reading from the N-terminus, the 160-residue chain is SsrA-binding protein (160 aa).

The tract at residues Y134 to D160 is disordered.

This sequence belongs to the SmpB family.

Its subcellular location is the cytoplasm. In terms of biological role, required for rescue of stalled ribosomes mediated by trans-translation. Binds to transfer-messenger RNA (tmRNA), required for stable association of tmRNA with ribosomes. tmRNA and SmpB together mimic tRNA shape, replacing the anticodon stem-loop with SmpB. tmRNA is encoded by the ssrA gene; the 2 termini fold to resemble tRNA(Ala) and it encodes a 'tag peptide', a short internal open reading frame. During trans-translation Ala-aminoacylated tmRNA acts like a tRNA, entering the A-site of stalled ribosomes, displacing the stalled mRNA. The ribosome then switches to translate the ORF on the tmRNA; the nascent peptide is terminated with the 'tag peptide' encoded by the tmRNA and targeted for degradation. The ribosome is freed to recommence translation, which seems to be the essential function of trans-translation. The polypeptide is SsrA-binding protein (Pseudomonas fluorescens (strain SBW25)).